We begin with the raw amino-acid sequence, 1311 residues long: DENN domain-containing protein 5B (1311 aa).

Residues 53–270 (ATAAGENFDQ…EVPLPASGRS (218 aa)) enclose the uDENN domain. A compositionally biased stretch (polar residues) spans 154-165 (QAEHNTSAQNCT). Residues 154–201 (QAEHNTSAQNCTSSSSSSSSSSSSSSMDSLSSSLDDVDSPSAHGGRRT) form a disordered region. A compositionally biased stretch (low complexity) spans 166–187 (SSSSSSSSSSSSSSMDSLSSSL). One can recognise a cDENN domain in the interval 289-452 (ELPLADFPLA…AVMSLQTSVL (164 aa)). The region spanning 454 to 619 (KELKSTSLRE…DNKIMSQWEE (166 aa)) is the dDENN domain. The 161-residue stretch at 809-969 (LEENTLIASL…DYFCFTSVFT (161 aa)) folds into the RUN 1 domain. The segment at 854–874 (EQQLESPVSNGQERRKTESSV) is disordered. A helical transmembrane segment spans residues 962–982 (FCFTSVFTTIMIPYRAVIIPI). Residues 973 to 1081 (IPYRAVIIPI…DDGSLERVLI (109 aa)) enclose the PLAT domain. Residues 1155-1306 (TVLLCGEGGL…FPITLETSLT (152 aa)) form the RUN 2 domain.

Belongs to the RAB6IP1 family.

Its subcellular location is the membrane. Guanine nucleotide exchange factor (GEF) which may activate the small GTPases Rab. May promote the exchange of GDP to GTP, converting inactive GDP-bound Rab proteins into their active GTP-bound form. The sequence is that of DENN domain-containing protein 5B (dennd5b) from Danio rerio (Zebrafish).